Here is a 59-residue protein sequence, read N- to C-terminus: Conotoxin mr5a (59 aa).

Positions 1–22 (MRCLPVFVILLLLIASAPSVDA) are cleaved as a signal peptide. Positions 23–48 (RPKTKDDMPLASFHDNAKRILQILQD) are excised as a propeptide.

Post-translationally, contains 2 disulfide bonds that can be either 'C1-C3, C2-C4' or 'C1-C4, C2-C3', since these disulfide connectivities have been observed for conotoxins with cysteine framework V (for examples, see AC P0DQQ7 and AC P81755). In terms of tissue distribution, expressed by the venom duct.

It localises to the secreted. The chain is Conotoxin mr5a from Conus marmoreus (Marble cone).